Consider the following 395-residue polypeptide: Flap endonuclease 1 (395 aa).

An N-domain region spans residues 1–108 (MGILGLSKLL…DELETRRQKA (108 aa)). Aspartate 34 serves as a coordination point for Mg(2+). Arginine 74 provides a ligand contact to DNA. 5 residues coordinate Mg(2+): aspartate 90, glutamate 162, glutamate 164, aspartate 183, and aspartate 185. Residues 126 to 257 (MMEKMSKRTV…QRAWEGIQRY (132 aa)) are I-domain. A DNA-binding site is contributed by glutamate 162. The DNA site is built by glycine 235 and aspartate 237. Aspartate 237 is a Mg(2+) binding site. The tract at residues 340 to 348 (TQGRLDNFF) is interaction with PCNA.

The protein belongs to the XPG/RAD2 endonuclease family. FEN1 subfamily. In terms of assembly, interacts with PCNA. Three molecules of FEN1 bind to one PCNA trimer with each molecule binding to one PCNA monomer. PCNA stimulates the nuclease activity without altering cleavage specificity. It depends on Mg(2+) as a cofactor. Phosphorylated. Phosphorylation upon DNA damage induces relocalization to the nuclear plasma.

The protein resides in the nucleus. It is found in the nucleolus. It localises to the nucleoplasm. Its subcellular location is the mitochondrion. Functionally, structure-specific nuclease with 5'-flap endonuclease and 5'-3' exonuclease activities involved in DNA replication and repair. During DNA replication, cleaves the 5'-overhanging flap structure that is generated by displacement synthesis when DNA polymerase encounters the 5'-end of a downstream Okazaki fragment. It enters the flap from the 5'-end and then tracks to cleave the flap base, leaving a nick for ligation. Also involved in the long patch base excision repair (LP-BER) pathway, by cleaving within the apurinic/apyrimidinic (AP) site-terminated flap. Acts as a genome stabilization factor that prevents flaps from equilibrating into structures that lead to duplications and deletions. Also possesses 5'-3' exonuclease activity on nicked or gapped double-stranded DNA, and exhibits RNase H activity. Also involved in replication and repair of rDNA and in repairing mitochondrial DNA. The polypeptide is Flap endonuclease 1 (Leishmania braziliensis).